The chain runs to 277 residues: Shikimate dehydrogenase (NADP(+)) (277 aa).

Shikimate contacts are provided by residues S15 to S17 and T62. Catalysis depends on K66, which acts as the Proton acceptor. Shikimate is bound by residues N87 and D102. NADP(+) contacts are provided by residues G127–A131 and I219. Shikimate is bound at residue Y221. Residue G242 coordinates NADP(+).

This sequence belongs to the shikimate dehydrogenase family. As to quaternary structure, homodimer.

The enzyme catalyses shikimate + NADP(+) = 3-dehydroshikimate + NADPH + H(+). It participates in metabolic intermediate biosynthesis; chorismate biosynthesis; chorismate from D-erythrose 4-phosphate and phosphoenolpyruvate: step 4/7. Its function is as follows. Involved in the biosynthesis of the chorismate, which leads to the biosynthesis of aromatic amino acids. Catalyzes the reversible NADPH linked reduction of 3-dehydroshikimate (DHSA) to yield shikimate (SA). The protein is Shikimate dehydrogenase (NADP(+)) of Bacillus cytotoxicus (strain DSM 22905 / CIP 110041 / 391-98 / NVH 391-98).